Here is a 430-residue protein sequence, read N- to C-terminus: MANVVVVGAQWGDEGKGKIVDWLSEQADIVVRFQGGHNAGHTLVINGQTYKLALLPSGVLRPSKLSVIGNGVVFDPQAFLDEVKKLQDQGVAISPDNLRIAENVTLILPLHRELDALRENASKATAIGTTQRGIGPAYEDKVGRRAIRLMDLADLATLPPKIDRLLAHHNALRRGFSLPEFDAGKILQELTAFAPKLLPYAETVWRLLDIKRREGKRILFEGAQGALLDVDHGTYPYVTSSNTVAAQAATGTGMGPSTVGYVLGICKAYTTRVGQGPFPTELTNEIGEEIGRRGKEFGVNTGRKRRCGWFDAVLVRQTVRTCGIHGLALTKLDILDGFDSIEVCVGYMLDGKEIDHLPAGEGAQSRVEPIYETIEGWKEPTANARSWADLPAQAIKYVRRVEELVGCPIALLSTSPEREDTILVQNPFEA.

GTP is bound by residues 12-18 (GDEGKGK) and 40-42 (GHT). The active-site Proton acceptor is Asp13. Mg(2+) is bound by residues Asp13 and Gly40. Residues 13–16 (DEGK), 38–41 (NAGH), Thr130, Arg144, Gln224, Thr239, and Arg303 each bind IMP. The Proton donor role is filled by His41. 299 to 305 (VNTGRKR) provides a ligand contact to substrate. GTP contacts are provided by residues Arg305, 331–333 (KLD), and 413–415 (STS).

The protein belongs to the adenylosuccinate synthetase family. In terms of assembly, homodimer. Mg(2+) is required as a cofactor.

Its subcellular location is the cytoplasm. The catalysed reaction is IMP + L-aspartate + GTP = N(6)-(1,2-dicarboxyethyl)-AMP + GDP + phosphate + 2 H(+). It participates in purine metabolism; AMP biosynthesis via de novo pathway; AMP from IMP: step 1/2. Functionally, plays an important role in the de novo pathway of purine nucleotide biosynthesis. Catalyzes the first committed step in the biosynthesis of AMP from IMP. The protein is Adenylosuccinate synthetase of Rhodopseudomonas palustris (strain BisB18).